Consider the following 185-residue polypeptide: HTH-type transcriptional regulator SAR2658 (185 aa).

The HTH tetR-type domain occupies Lys-6 to Phe-66. Residues Ser-29–Phe-48 constitute a DNA-binding region (H-T-H motif).

In Staphylococcus aureus (strain MRSA252), this protein is HTH-type transcriptional regulator SAR2658.